A 427-amino-acid polypeptide reads, in one-letter code: 3-phosphoshikimate 1-carboxyvinyltransferase (427 aa).

3 residues coordinate 3-phosphoshikimate: lysine 20, serine 21, and arginine 25. Lysine 20 lines the phosphoenolpyruvate pocket. Phosphoenolpyruvate-binding residues include glycine 92 and arginine 120. 3-phosphoshikimate contacts are provided by serine 166, glutamine 168, aspartate 312, and lysine 339. Glutamine 168 is a phosphoenolpyruvate binding site. The active-site Proton acceptor is aspartate 312. Phosphoenolpyruvate-binding residues include arginine 343 and arginine 385.

Belongs to the EPSP synthase family. As to quaternary structure, monomer.

It localises to the cytoplasm. It carries out the reaction 3-phosphoshikimate + phosphoenolpyruvate = 5-O-(1-carboxyvinyl)-3-phosphoshikimate + phosphate. It participates in metabolic intermediate biosynthesis; chorismate biosynthesis; chorismate from D-erythrose 4-phosphate and phosphoenolpyruvate: step 6/7. Catalyzes the transfer of the enolpyruvyl moiety of phosphoenolpyruvate (PEP) to the 5-hydroxyl of shikimate-3-phosphate (S3P) to produce enolpyruvyl shikimate-3-phosphate and inorganic phosphate. This chain is 3-phosphoshikimate 1-carboxyvinyltransferase, found in Streptococcus sanguinis (strain SK36).